The chain runs to 101 residues: Small ribosomal subunit protein uS14 (101 aa).

The span at 1-11 (MAKKSSVEKNN) shows a compositional bias: basic and acidic residues. Residues 1–22 (MAKKSSVEKNNRRQRMVKNAAA) form a disordered region. Residues 12 to 22 (RRQRMVKNAAA) show a composition bias toward basic residues.

It belongs to the universal ribosomal protein uS14 family. In terms of assembly, part of the 30S ribosomal subunit. Contacts proteins S3 and S10.

Functionally, binds 16S rRNA, required for the assembly of 30S particles and may also be responsible for determining the conformation of the 16S rRNA at the A site. This chain is Small ribosomal subunit protein uS14, found in Afipia carboxidovorans (strain ATCC 49405 / DSM 1227 / KCTC 32145 / OM5) (Oligotropha carboxidovorans).